A 386-amino-acid polypeptide reads, in one-letter code: Queuine tRNA-ribosyltransferase (386 aa).

Residue D102 is the Proton acceptor of the active site. Substrate contacts are provided by residues 102–106 (DSGGY), D156, Q203, and G230. The RNA binding stretch occupies residues 261-267 (GVGKPDD). The active-site Nucleophile is D280. The segment at 285–289 (TRSGR) is RNA binding; important for wobble base 34 recognition. Positions 318, 320, 323, and 349 each coordinate Zn(2+).

The protein belongs to the queuine tRNA-ribosyltransferase family. Homodimer. Within each dimer, one monomer is responsible for RNA recognition and catalysis, while the other monomer binds to the replacement base PreQ1. Requires Zn(2+) as cofactor.

The enzyme catalyses 7-aminomethyl-7-carbaguanine + guanosine(34) in tRNA = 7-aminomethyl-7-carbaguanosine(34) in tRNA + guanine. It functions in the pathway tRNA modification; tRNA-queuosine biosynthesis. Functionally, catalyzes the base-exchange of a guanine (G) residue with the queuine precursor 7-aminomethyl-7-deazaguanine (PreQ1) at position 34 (anticodon wobble position) in tRNAs with GU(N) anticodons (tRNA-Asp, -Asn, -His and -Tyr). Catalysis occurs through a double-displacement mechanism. The nucleophile active site attacks the C1' of nucleotide 34 to detach the guanine base from the RNA, forming a covalent enzyme-RNA intermediate. The proton acceptor active site deprotonates the incoming PreQ1, allowing a nucleophilic attack on the C1' of the ribose to form the product. After dissociation, two additional enzymatic reactions on the tRNA convert PreQ1 to queuine (Q), resulting in the hypermodified nucleoside queuosine (7-(((4,5-cis-dihydroxy-2-cyclopenten-1-yl)amino)methyl)-7-deazaguanosine). The polypeptide is Queuine tRNA-ribosyltransferase (Zymomonas mobilis subsp. mobilis (strain ATCC 31821 / ZM4 / CP4)).